Consider the following 515-residue polypeptide: 2-isopropylmalate synthase (515 aa).

A Pyruvate carboxyltransferase domain is found at 5-268 (VIIFDTTLRD…VCGIDASQIV (264 aa)). 4 residues coordinate Mn(2+): aspartate 14, histidine 202, histidine 204, and asparagine 239. The segment at 394 to 515 (HFISLSQHSE…QAKLNAQMAP (122 aa)) is regulatory domain.

The protein belongs to the alpha-IPM synthase/homocitrate synthase family. LeuA type 1 subfamily. Homodimer. Requires Mn(2+) as cofactor.

The protein resides in the cytoplasm. The catalysed reaction is 3-methyl-2-oxobutanoate + acetyl-CoA + H2O = (2S)-2-isopropylmalate + CoA + H(+). It functions in the pathway amino-acid biosynthesis; L-leucine biosynthesis; L-leucine from 3-methyl-2-oxobutanoate: step 1/4. Functionally, catalyzes the condensation of the acetyl group of acetyl-CoA with 3-methyl-2-oxobutanoate (2-ketoisovalerate) to form 3-carboxy-3-hydroxy-4-methylpentanoate (2-isopropylmalate). The protein is 2-isopropylmalate synthase of Polynucleobacter asymbioticus (strain DSM 18221 / CIP 109841 / QLW-P1DMWA-1) (Polynucleobacter necessarius subsp. asymbioticus).